Consider the following 435-residue polypeptide: Putative F-box/kelch-repeat protein At1g13200 (435 aa).

The segment at 1-29 (MKDAEKREVIASSSLQRKRNRGRRLRKRR) is disordered. The segment covering 16 to 29 (QRKRNRGRRLRKRR) has biased composition (basic residues). Residues 37–82 (LMVPSSLPNDVLEEIFLRFPVKALIRLKSLSKQWRSTIESRSFEER) form the F-box domain. Kelch repeat units follow at residues 164–217 (SVYV…DYKL), 224–270 (DKYI…PASA), 273–317 (SVYW…HIDM), and 322–368 (NSLC…EKRD).

This Arabidopsis thaliana (Mouse-ear cress) protein is Putative F-box/kelch-repeat protein At1g13200.